Here is a 377-residue protein sequence, read N- to C-terminus: Nitric oxide reductase FlRd-NAD(+) reductase (377 aa).

This sequence belongs to the FAD-dependent oxidoreductase family. FAD serves as cofactor.

It is found in the cytoplasm. It catalyses the reaction 2 reduced [nitric oxide reductase rubredoxin domain] + NAD(+) + H(+) = 2 oxidized [nitric oxide reductase rubredoxin domain] + NADH. The protein operates within nitrogen metabolism; nitric oxide reduction. In terms of biological role, one of at least two accessory proteins for anaerobic nitric oxide (NO) reductase. Reduces the rubredoxin moiety of NO reductase. The polypeptide is Nitric oxide reductase FlRd-NAD(+) reductase (Shigella boydii serotype 18 (strain CDC 3083-94 / BS512)).